A 294-amino-acid polypeptide reads, in one-letter code: Shikimate dehydrogenase (NADP(+)) (294 aa).

Shikimate-binding positions include 22 to 24 (SLS) and Ser69. Residue Lys73 is the Proton acceptor of the active site. Residues Asn94 and Asp111 each contribute to the shikimate site. NADP(+) is bound by residues 135–139 (GAGGA) and Leu236. Shikimate is bound at residue Tyr238. Gly260 is an NADP(+) binding site.

The protein belongs to the shikimate dehydrogenase family. As to quaternary structure, homodimer.

It carries out the reaction shikimate + NADP(+) = 3-dehydroshikimate + NADPH + H(+). Its pathway is metabolic intermediate biosynthesis; chorismate biosynthesis; chorismate from D-erythrose 4-phosphate and phosphoenolpyruvate: step 4/7. Involved in the biosynthesis of the chorismate, which leads to the biosynthesis of aromatic amino acids. Catalyzes the reversible NADPH linked reduction of 3-dehydroshikimate (DHSA) to yield shikimate (SA). The chain is Shikimate dehydrogenase (NADP(+)) from Streptococcus equi subsp. zooepidemicus (strain MGCS10565).